The chain runs to 208 residues: Protein-L-isoaspartate O-methyltransferase (208 aa).

Residue S59 is part of the active site.

It belongs to the methyltransferase superfamily. L-isoaspartyl/D-aspartyl protein methyltransferase family.

It localises to the cytoplasm. The catalysed reaction is [protein]-L-isoaspartate + S-adenosyl-L-methionine = [protein]-L-isoaspartate alpha-methyl ester + S-adenosyl-L-homocysteine. Catalyzes the methyl esterification of L-isoaspartyl residues in peptides and proteins that result from spontaneous decomposition of normal L-aspartyl and L-asparaginyl residues. It plays a role in the repair and/or degradation of damaged proteins. This chain is Protein-L-isoaspartate O-methyltransferase, found in Escherichia fergusonii (strain ATCC 35469 / DSM 13698 / CCUG 18766 / IAM 14443 / JCM 21226 / LMG 7866 / NBRC 102419 / NCTC 12128 / CDC 0568-73).